A 151-amino-acid polypeptide reads, in one-letter code: Deoxyuridine 5'-triphosphate nucleotidohydrolase (151 aa).

Substrate is bound by residues 70–72, Asn83, and 87–89; these read RSG and VID.

It belongs to the dUTPase family. Requires Mg(2+) as cofactor.

It carries out the reaction dUTP + H2O = dUMP + diphosphate + H(+). It participates in pyrimidine metabolism; dUMP biosynthesis; dUMP from dCTP (dUTP route): step 2/2. This enzyme is involved in nucleotide metabolism: it produces dUMP, the immediate precursor of thymidine nucleotides and it decreases the intracellular concentration of dUTP so that uracil cannot be incorporated into DNA. The chain is Deoxyuridine 5'-triphosphate nucleotidohydrolase from Desulfitobacterium hafniense (strain DSM 10664 / DCB-2).